The sequence spans 278 residues: uncharacterized protein (278 aa).

This is an uncharacterized protein from Escherichia coli (Bacteriophage T4).